The sequence spans 243 residues: Pyridoxine 5'-phosphate synthase (243 aa).

Position 9 (asparagine 9) interacts with 3-amino-2-oxopropyl phosphate. 11 to 12 (DH) serves as a coordination point for 1-deoxy-D-xylulose 5-phosphate. Arginine 20 is a binding site for 3-amino-2-oxopropyl phosphate. Histidine 45 (proton acceptor) is an active-site residue. Arginine 47 and histidine 52 together coordinate 1-deoxy-D-xylulose 5-phosphate. The Proton acceptor role is filled by glutamate 72. Threonine 102 is a 1-deoxy-D-xylulose 5-phosphate binding site. Histidine 193 acts as the Proton donor in catalysis. 3-amino-2-oxopropyl phosphate is bound by residues glycine 194 and 215–216 (GH).

It belongs to the PNP synthase family. Homooctamer; tetramer of dimers.

The protein resides in the cytoplasm. It carries out the reaction 3-amino-2-oxopropyl phosphate + 1-deoxy-D-xylulose 5-phosphate = pyridoxine 5'-phosphate + phosphate + 2 H2O + H(+). It participates in cofactor biosynthesis; pyridoxine 5'-phosphate biosynthesis; pyridoxine 5'-phosphate from D-erythrose 4-phosphate: step 5/5. Catalyzes the complicated ring closure reaction between the two acyclic compounds 1-deoxy-D-xylulose-5-phosphate (DXP) and 3-amino-2-oxopropyl phosphate (1-amino-acetone-3-phosphate or AAP) to form pyridoxine 5'-phosphate (PNP) and inorganic phosphate. The protein is Pyridoxine 5'-phosphate synthase of Shigella sonnei (strain Ss046).